The primary structure comprises 1129 residues: Inositol hexakisphosphate and diphosphoinositol-pentakisphosphate kinase 2 (1129 aa).

The residue at position 44 (serine 44) is a Phosphoserine. 59-60 (KK) contacts substrate. Residues arginine 140, lysine 193, histidine 200, and arginine 219 each coordinate ATP. 219–220 (RK) contacts substrate. Residue serine 229 is modified to Phosphoserine. ATP contacts are provided by residues 243-246 (EEFM) and 252-254 (DVK). The substrate site is built by lysine 254 and arginine 268. Residues serine 270, aspartate 315, and 327-329 (DVN) each bind ATP. 332 to 335 (SFVK) serves as a coordination point for substrate. Residues 377–448 (PTTSGTMMEL…VLDIARQLLM (72 aa)) are polyphosphoinositide-binding domain. Positions 904 to 945 (KGCEEDKNLPSGYGYRPASRENEGRRSLKTDDDEPHTSKRDE) are disordered. Positions 921–945 (ASRENEGRRSLKTDDDEPHTSKRDE) are enriched in basic and acidic residues. Serine 1051, serine 1058, and serine 1066 each carry phosphoserine. A disordered region spans residues 1070 to 1129 (YTPTKILPTPPAALKSSKASSKAAAGGPSQAMAPHTSSRKKSINSKTEGHEPKKSTGKKR). Low complexity predominate over residues 1081-1098 (AALKSSKASSKAAAGGPS). Phosphoserine occurs at positions 1106 and 1107.

Belongs to the histidine acid phosphatase family. VIP1 subfamily. In terms of tissue distribution, ubiquitously expressed. Expressed in the cochlear and vestibular sensory hair cells, supporting cells and spiral ganglion neurons.

The protein localises to the cytoplasm. The protein resides in the cytosol. It catalyses the reaction 1D-myo-inositol hexakisphosphate + ATP = 1-diphospho-1D-myo-inositol 2,3,4,5,6-pentakisphosphate + ADP. The enzyme catalyses 5-diphospho-1D-myo-inositol 1,2,3,4,6-pentakisphosphate + ATP + H(+) = 1,5-bis(diphospho)-1D-myo-inositol 2,3,4,6-tetrakisphosphate + ADP. In terms of biological role, bifunctional inositol kinase that acts in concert with the IP6K kinases IP6K1, IP6K2 and IP6K3 to synthesize the diphosphate group-containing inositol pyrophosphates diphosphoinositol pentakisphosphate, PP-InsP5, and bis-diphosphoinositol tetrakisphosphate, (PP)2-InsP4. PP-InsP5 and (PP)2-InsP4, also respectively called InsP7 and InsP8, regulate a variety of cellular processes, including apoptosis, vesicle trafficking, cytoskeletal dynamics, exocytosis, insulin signaling and neutrophil activation. Phosphorylates inositol hexakisphosphate (InsP6) at position 1 to produce PP-InsP5 which is in turn phosphorylated by IP6Ks to produce (PP)2-InsP4. Alternatively, phosphorylates PP-InsP5 at position 1, produced by IP6Ks from InsP6, to produce (PP)2-InsP4. Required for normal hearing. The protein is Inositol hexakisphosphate and diphosphoinositol-pentakisphosphate kinase 2 of Mus musculus (Mouse).